Here is a 585-residue protein sequence, read N- to C-terminus: Regulator of gene activity (585 aa).

Residues 42 to 56 (FQTDFANSYPGTANY) show a composition bias toward polar residues. Disordered regions lie at residues 42–93 (FQTD…GNRN), 148–191 (GGGG…PGSK), and 349–394 (GVGG…KVTN). Residues 58 to 71 (QAPQQQQQQQQQPQ) show a composition bias toward low complexity. Residues 166–184 (PSLTNARGQNDQTLPQSNP) show a composition bias toward polar residues. Gly residues predominate over residues 349-367 (GVGGGLGSGSGSSGSGAGG). Over residues 372-388 (DNSSNDKLVKSGVQTSP) the composition is skewed to polar residues.

Belongs to the CNOT2/3/5 family. As to quaternary structure, component of the CCR4-NOT complex composed of at least Pop2/Caf1-55, Ccr4, Not1, Rga/Not2, and Not3. In terms of tissue distribution, expressed in heterogeneous levels between adjacent germline stem cells (at protein level).

Its subcellular location is the cytoplasm. In terms of biological role, component of the CCR4-NOT complex which is one of the major cellular mRNA deadenylases and is linked to various cellular processes including bulk mRNA degradation, miRNA-mediated repression, translational repression during translational initiation and general transcription regulation. Additional complex functions may be a consequence of its influence on mRNA expression. Essential for viability. Acts as a suppressor of position effect variegation (PEV) at the white locus and regulates the expression of several unrelated genes. Plays a role in germline stem cell differentiation in the ovaries. This Drosophila melanogaster (Fruit fly) protein is Regulator of gene activity.